Consider the following 604-residue polypeptide: Matrix metalloproteinase-21 (604 aa).

The N-terminal stretch at 1 to 22 (MPSIKLLVWCCLCVISPRLCHS) is a signal peptide. Positions 23–180 (EKLFHSRDRS…PDPPKIRRKR (158 aa)) are excised as a propeptide. The tract at residues 132 to 175 (KPRCGVPDNQMAKKETEKPTAAQSLENKTKDSENVTQQNPDPPK) is disordered. Positions 133–140 (PRCGVPDN) match the Cysteine switch motif. Zn(2+) is bound at residue cysteine 135. Asparagine 158 and asparagine 165 each carry an N-linked (GlcNAc...) asparagine glycan. Histidine 318 provides a ligand contact to Zn(2+). The active site involves glutamate 319. Residues histidine 322 and histidine 328 each coordinate Zn(2+). Cysteines 364 and 595 form a disulfide. Hemopexin repeat units lie at residues 365 to 424 (EGPF…WHGI), 426 to 482 (VQNI…FPGI), 483 to 531 (PSPI…FPAV), and 538 to 594 (KGNI…WFDI). Asparagine 404 and asparagine 407 each carry an N-linked (GlcNAc...) asparagine glycan.

Belongs to the peptidase M10A family. It depends on Zn(2+) as a cofactor. Ca(2+) serves as cofactor. The precursor is cleaved by a furin endopeptidase.

It is found in the secreted. Functionally, plays a specialized role in the generation of left-right asymmetry during embryogenesis. May act as a negative regulator of the NOTCH-signaling pathway. The protein is Matrix metalloproteinase-21 (mmp21) of Xenopus laevis (African clawed frog).